A 549-amino-acid polypeptide reads, in one-letter code: MKSDTIKRGIQRAPHRSLLARCGLTDDDFEKPFIGIANSYTDIVPGHIHLRELAEAVKEGVNAAGGVAFEFNTMAICDGIAMNHDGMKYSLASREIVADTVESMAMAHALDGLVLLPTCDKIVPGMLMAAARLDIPAIVVTGGPMLPGEFKGRKVDLINVYEGVGTVSAGEMSEDELEELERCACPGPRSCAGLFTANTMACLTEALGMSLPGCATAHAVSSRKRQIARLSGKRIVEMVQENLKPTMIMSQEAFENAVMVDLALGGSTNTTLHIPAIAAEIDGLNINLDLFDELSRVIPHIASISPAGEHMMLDLDRAGGIPAVLKTLEDHINRECVTCTGRTVQENIENVKVGHRDVIRPLDSPVHSEGGLAILRGNLAPRGSVVKQGAVAEDMMVHEGPAKVFNSEDECMEAIFGGRIDEGDVIVIRYEGPKGGPGMREMLNPTSAIAGMGLERVALITDGRFSGGTRGPCVGHVSPEAMEDGPLAAVNDGDIIRIDIPSRKLEVDLSPREIEERLQSAVKPRRSVKGWLARYRKLAGSADTGAVLR.

Asp-78 lines the Mg(2+) pocket. Cys-119 provides a ligand contact to [2Fe-2S] cluster. Residues Asp-120 and Lys-121 each coordinate Mg(2+). N6-carboxylysine is present on Lys-121. Cys-191 is a binding site for [2Fe-2S] cluster. Glu-441 contacts Mg(2+). The active-site Proton acceptor is Ser-466.

It belongs to the IlvD/Edd family. As to quaternary structure, homodimer. The cofactor is [2Fe-2S] cluster. Mg(2+) is required as a cofactor.

The enzyme catalyses (2R)-2,3-dihydroxy-3-methylbutanoate = 3-methyl-2-oxobutanoate + H2O. The catalysed reaction is (2R,3R)-2,3-dihydroxy-3-methylpentanoate = (S)-3-methyl-2-oxopentanoate + H2O. It functions in the pathway amino-acid biosynthesis; L-isoleucine biosynthesis; L-isoleucine from 2-oxobutanoate: step 3/4. It participates in amino-acid biosynthesis; L-valine biosynthesis; L-valine from pyruvate: step 3/4. Functions in the biosynthesis of branched-chain amino acids. Catalyzes the dehydration of (2R,3R)-2,3-dihydroxy-3-methylpentanoate (2,3-dihydroxy-3-methylvalerate) into 2-oxo-3-methylpentanoate (2-oxo-3-methylvalerate) and of (2R)-2,3-dihydroxy-3-methylbutanoate (2,3-dihydroxyisovalerate) into 2-oxo-3-methylbutanoate (2-oxoisovalerate), the penultimate precursor to L-isoleucine and L-valine, respectively. The sequence is that of Dihydroxy-acid dehydratase from Methanothermobacter thermautotrophicus (strain ATCC 29096 / DSM 1053 / JCM 10044 / NBRC 100330 / Delta H) (Methanobacterium thermoautotrophicum).